A 72-amino-acid polypeptide reads, in one-letter code: Neuropeptide IMFamide (72 aa).

Residues 1-24 (MMRFTIGVVCLVAVLLSLAEVSEA) form the signal peptide. Phe-36 bears the Phenylalanine amide mark. The propeptide occupies 40–72 (GPTEYDQRGKTFTALCEIATEACQAWFPSTENK).

In terms of tissue distribution, expressed in corpora cardiaca (CC), corpora allata (CA), antennal lobe (AL) and gnathal ganglion (GNG) (at protein level). Expression detected in only a few animals (at protein level).

The protein localises to the secreted. This chain is Neuropeptide IMFamide, found in Agrotis ipsilon (Black cutworm moth).